A 570-amino-acid polypeptide reads, in one-letter code: Multidrug and toxin extrusion protein 1 (570 aa).

At Met-1 the chain carries N-acetylmethionine. Residues 1–37 (MEAPEEPAPVRGGPEATLEIHGSRFLRLSAFREELRA) lie on the Cytoplasmic side of the membrane. The chain crosses the membrane as a helical span at residues 38 to 58 (LLVLAGPAFLVQLMVFLISFI). Residues 59 to 72 (SSVFCGHLGKLELD) are Extracellular-facing. Residues 73–93 (AVTLAIAVINVTGVSVGFGLS) form a helical membrane-spanning segment. Residues 94-120 (SACDTLISQTYGSQNLKHVGVILQRSA) lie on the Cytoplasmic side of the membrane. A helical membrane pass occupies residues 121 to 141 (LILLLCCFPCWALFLNTQHIL). The Extracellular segment spans residues 142–152 (LLFRQDPDVSR). Residues 153 to 173 (LTQTYVTIFIPALPATFLYML) traverse the membrane as a helical segment. Residues 174 to 176 (QVK) lie on the Cytoplasmic side of the membrane. A helical membrane pass occupies residues 177–197 (YLLNQGIVLPQIVTGVAANLV). At 198 to 216 (NALANYLFLHQLHLGAIGS) the chain is on the extracellular side. A helical membrane pass occupies residues 217 to 237 (ALANLISQYTLALLLFFYILG). Topologically, residues 238-251 (KKLHQATWGGWSLE) are cytoplasmic. Residues 252-272 (CLQDWASFLHLAVPSMLMLCM) form a helical membrane-spanning segment. Residues 273–295 (EWWAYEVGSFLSGILGMVELGAQ) lie on the Extracellular side of the membrane. Residues 296–316 (SIVYELAIIVYMVPAGFSVAA) form a helical membrane-spanning segment. Over 317–336 (SVRVGNALGAGDMEQARKSS) the chain is Cytoplasmic. The helical transmembrane segment at 337–357 (TVSLLITVLFAVAFSVLLLSC) threads the bilayer. Over 358–370 (KDHVGYIFTTDRD) the chain is Extracellular. A helical membrane pass occupies residues 371–391 (IINLVAQVVPIYAVSHLFEAL). At 392–408 (ACTSGGVLRGSGNQKVG) the chain is on the cytoplasmic side. The chain crosses the membrane as a helical span at residues 409-429 (AIVNTIGYYVVGLPIGIALMF). Residues 430-437 (ATKLGVMG) lie on the Extracellular side of the membrane. The chain crosses the membrane as a helical span at residues 438-458 (LWSGIIICTVFQAVCFLGFII). Topologically, residues 459–546 (QLNWKKACQQ…LSRKQLVLRR (88 aa)) are cytoplasmic. The tract at residues 508–534 (DVGKTGETQSDQQMRQEEPLPEHPQDS) is disordered. A compositionally biased stretch (basic and acidic residues) spans 521–533 (MRQEEPLPEHPQD). A helical transmembrane segment spans residues 547-567 (GLLLLGVFLILLVGILVRFYV). Residues 568-570 (RIQ) are Extracellular-facing.

This sequence belongs to the multi antimicrobial extrusion (MATE) (TC 2.A.66.1) family.

The protein resides in the cell membrane. It localises to the apical cell membrane. It catalyses the reaction thiamine(out) + H(+)(in) = thiamine(in) + H(+)(out). It carries out the reaction estrone 3-sulfate(in) + H(+)(out) = estrone 3-sulfate(out) + H(+)(in). The catalysed reaction is creatinine(in) + H(+)(out) = creatinine(out) + H(+)(in). The enzyme catalyses agmatine(in) + H(+)(out) = agmatine(out) + H(+)(in). Its function is as follows. Multidrug efflux pump that functions as a H(+)/organic cation antiporter. Plays a physiological role in the excretion of cationic compounds including endogenous metabolites, drugs, toxins through the kidney and liver, into urine and bile respectively. Mediates the efflux of endogenous compounds such as creatinine, vitamin B1/thiamine, agmatine and estrone-3-sulfate. May also contribute to regulate the transport of cationic compounds in testis across the blood-testis-barrier. In Pongo abelii (Sumatran orangutan), this protein is Multidrug and toxin extrusion protein 1 (SLC47A1).